We begin with the raw amino-acid sequence, 139 residues long: Putative pre-16S rRNA nuclease (139 aa).

Belongs to the YqgF nuclease family.

It is found in the cytoplasm. Could be a nuclease involved in processing of the 5'-end of pre-16S rRNA. This Streptococcus pyogenes serotype M1 protein is Putative pre-16S rRNA nuclease.